Reading from the N-terminus, the 68-residue chain is Molybdenum-pterin-binding protein 2 (68 aa).

A Mop domain is found at 2–68 (SISARNQLKG…VKSTDVMILA (67 aa)).

In terms of biological role, binds one mole of molybdenum per mole of protein and contains a pterin. This Clostridium pasteurianum protein is Molybdenum-pterin-binding protein 2 (mopII).